Here is a 189-residue protein sequence, read N- to C-terminus: Thermostable direct hemolysin 1 (189 aa).

The first 24 residues, 1-24 (MKHQYFAKKSFLFISMLAAFKTSA), serve as a signal peptide directing secretion. Cysteine 175 and cysteine 185 are oxidised to a cystine.

The protein belongs to the TDH hemolysin family. As to quaternary structure, homodimer.

Its function is as follows. Bacterial hemolysins are exotoxins that attack blood cell membranes and cause cell rupture by mechanisms not clearly defined. The polypeptide is Thermostable direct hemolysin 1 (tdh1) (Vibrio parahaemolyticus serotype O3:K6 (strain RIMD 2210633)).